The chain runs to 246 residues: 3-deoxy-manno-octulosonate cytidylyltransferase (246 aa).

The protein belongs to the KdsB family.

The protein resides in the cytoplasm. It carries out the reaction 3-deoxy-alpha-D-manno-oct-2-ulosonate + CTP = CMP-3-deoxy-beta-D-manno-octulosonate + diphosphate. The protein operates within nucleotide-sugar biosynthesis; CMP-3-deoxy-D-manno-octulosonate biosynthesis; CMP-3-deoxy-D-manno-octulosonate from 3-deoxy-D-manno-octulosonate and CTP: step 1/1. It participates in bacterial outer membrane biogenesis; lipopolysaccharide biosynthesis. In terms of biological role, activates KDO (a required 8-carbon sugar) for incorporation into bacterial lipopolysaccharide in Gram-negative bacteria. The chain is 3-deoxy-manno-octulosonate cytidylyltransferase from Rickettsia peacockii (strain Rustic).